The following is a 126-amino-acid chain: Fluoride-specific ion channel FluC (126 aa).

4 helical membrane-spanning segments follow: residues 4–24, 36–56, 67–85, and 101–121; these read LLLV…TSAW, GTLL…TASL, LFLA…SFNY, and AYLL…TLLV. 2 residues coordinate Na(+): Gly-75 and Thr-78.

It belongs to the fluoride channel Fluc/FEX (TC 1.A.43) family.

It is found in the cell inner membrane. The catalysed reaction is fluoride(in) = fluoride(out). Its activity is regulated as follows. Na(+) is not transported, but it plays an essential structural role and its presence is essential for fluoride channel function. In terms of biological role, fluoride-specific ion channel. Important for reducing fluoride concentration in the cell, thus reducing its toxicity. The sequence is that of Fluoride-specific ion channel FluC from Anaeromyxobacter sp. (strain K).